The primary structure comprises 164 residues: NADH-quinone oxidoreductase subunit C (164 aa).

It belongs to the complex I 30 kDa subunit family. NDH-1 is composed of 14 different subunits. Subunits NuoB, C, D, E, F, and G constitute the peripheral sector of the complex.

The protein localises to the cell inner membrane. It catalyses the reaction a quinone + NADH + 5 H(+)(in) = a quinol + NAD(+) + 4 H(+)(out). Its function is as follows. NDH-1 shuttles electrons from NADH, via FMN and iron-sulfur (Fe-S) centers, to quinones in the respiratory chain. The immediate electron acceptor for the enzyme in this species is believed to be ubiquinone. Couples the redox reaction to proton translocation (for every two electrons transferred, four hydrogen ions are translocated across the cytoplasmic membrane), and thus conserves the redox energy in a proton gradient. In Geotalea uraniireducens (strain Rf4) (Geobacter uraniireducens), this protein is NADH-quinone oxidoreductase subunit C.